Reading from the N-terminus, the 163-residue chain is Troponin C (163 aa).

Residue Ser-1 is modified to N-acetylserine. EF-hand domains are found at residues 14–49 (EQIS…LGMS), 50–85 (ISRE…AMQD), 90–125 (IPDD…CAGD), and 127–162 (LTDD…LKVR). Lys-20 is modified (N6,N6-dimethyllysine; alternate). At Lys-20 the chain carries N6-methyllysine; alternate. Residues Asp-27, Asp-29, Asp-33, Glu-38, Asp-63, Asp-65, Ser-67, Thr-69, Glu-74, Asp-103, Asn-105, Asp-107, and Glu-114 each coordinate Ca(2+).

This sequence belongs to the troponin C family.

In terms of biological role, troponin is the central regulatory protein of striated muscle contraction. Tn consists of three components: Tn-I which is the inhibitor of actomyosin ATPase, Tn-T which contains the binding site for tropomyosin and Tn-C. The binding of calcium to Tn-C abolishes the inhibitory action of Tn on actin filaments. This chain is Troponin C, found in Branchiostoma lanceolatum (Common lancelet).